A 160-amino-acid polypeptide reads, in one-letter code: Small ribosomal subunit protein uS7 (160 aa).

This sequence belongs to the universal ribosomal protein uS7 family. In terms of assembly, part of the 30S ribosomal subunit. Contacts proteins S9 and S11.

Functionally, one of the primary rRNA binding proteins, it binds directly to 16S rRNA where it nucleates assembly of the head domain of the 30S subunit. Is located at the subunit interface close to the decoding center, probably blocks exit of the E-site tRNA. In Ehrlichia canis (strain Jake), this protein is Small ribosomal subunit protein uS7.